Consider the following 487-residue polypeptide: 3-octaprenyl-4-hydroxybenzoate carboxy-lyase (487 aa).

N172 is a Mn(2+) binding site. Prenylated FMN-binding positions include I175–R177, R189–L191, and R194–G195. E238 contacts Mn(2+). The Proton donor role is filled by D287.

It belongs to the UbiD family. In terms of assembly, homohexamer. Prenylated FMN serves as cofactor. Mn(2+) is required as a cofactor.

The protein localises to the cell membrane. It catalyses the reaction a 4-hydroxy-3-(all-trans-polyprenyl)benzoate + H(+) = a 2-(all-trans-polyprenyl)phenol + CO2. It functions in the pathway cofactor biosynthesis; ubiquinone biosynthesis. In terms of biological role, catalyzes the decarboxylation of 3-octaprenyl-4-hydroxy benzoate to 2-octaprenylphenol, an intermediate step in ubiquinone biosynthesis. The chain is 3-octaprenyl-4-hydroxybenzoate carboxy-lyase from Nitrosococcus oceani (strain ATCC 19707 / BCRC 17464 / JCM 30415 / NCIMB 11848 / C-107).